A 421-amino-acid polypeptide reads, in one-letter code: Serine hydroxymethyltransferase (421 aa).

Residues L121 and 125–127 contribute to the (6S)-5,6,7,8-tetrahydrofolate site; that span reads GHL. N6-(pyridoxal phosphate)lysine is present on K229.

This sequence belongs to the SHMT family. Homodimer. It depends on pyridoxal 5'-phosphate as a cofactor.

Its subcellular location is the cytoplasm. It carries out the reaction (6R)-5,10-methylene-5,6,7,8-tetrahydrofolate + glycine + H2O = (6S)-5,6,7,8-tetrahydrofolate + L-serine. It functions in the pathway one-carbon metabolism; tetrahydrofolate interconversion. It participates in amino-acid biosynthesis; glycine biosynthesis; glycine from L-serine: step 1/1. Catalyzes the reversible interconversion of serine and glycine with tetrahydrofolate (THF) serving as the one-carbon carrier. This reaction serves as the major source of one-carbon groups required for the biosynthesis of purines, thymidylate, methionine, and other important biomolecules. Also exhibits THF-independent aldolase activity toward beta-hydroxyamino acids, producing glycine and aldehydes, via a retro-aldol mechanism. The sequence is that of Serine hydroxymethyltransferase from Haemophilus influenzae (strain PittGG).